A 246-amino-acid chain; its full sequence is Exosome complex component SKI6 (246 aa).

Belongs to the RNase PH family. In terms of assembly, component of the RNA exosome complex. Specifically part of the catalytically inactive RNA exosome core complex (Exo-9) which may associate with the catalytic subunits RRP6 and DIS3 in cytoplasmic- and nuclear-specific RNA exosome complex forms. Exo-9 is formed by a hexameric base ring of RNase PH domain-containing subunits and a cap ring consisting of CSL4, RRP4 and RRP40.

Its subcellular location is the cytoplasm. The protein resides in the nucleus. It is found in the nucleolus. Its function is as follows. Non-catalytic component of the RNA exosome complex which has 3'-&gt;5' exoribonuclease activity and participates in a multitude of cellular RNA processing and degradation events. In the nucleus, the RNA exosome complex is involved in proper maturation of stable RNA species such as rRNA, snRNA and snoRNA, in the elimination of RNA processing by-products and non-coding 'pervasive' transcripts, such as antisense RNA species and cryptic unstable transcripts (CUTs), and of mRNAs with processing defects, thereby limiting or excluding their export to the cytoplasm. In the cytoplasm, the RNA exosome complex is involved in general mRNA turnover and in RNA surveillance pathways, preventing translation of aberrant mRNAs. The catalytic inactive RNA exosome core complex of 9 subunits (Exo-9) is proposed to play a pivotal role in the binding and presentation of RNA for ribonucleolysis, and to serve as a scaffold for the association with catalytic subunits and accessory proteins or complexes. SKI6 is part of the hexameric ring of RNase PH domain-containing subunits proposed to form a central channel which threads RNA substrates for degradation. This Saccharomyces cerevisiae (strain ATCC 204508 / S288c) (Baker's yeast) protein is Exosome complex component SKI6 (SKI6).